The primary structure comprises 179 residues: MAELATIARPYAEALFRVAEGGDISAWSTLVQELAQVAQLPEVLSVASSPKVSRTQVAELLLAALKSPLASGAQAKNFVQMLVDNHRIALSPEIAVQFEALKNAREGAADVQIVSAFPLEGAQLAELVTSLERKFKRKLKPAVEVDSSLIGGVRVTVGDEVLDTSVRARLAGMQAALTA.

It belongs to the ATPase delta chain family. As to quaternary structure, F-type ATPases have 2 components, F(1) - the catalytic core - and F(0) - the membrane proton channel. F(1) has five subunits: alpha(3), beta(3), gamma(1), delta(1), epsilon(1). F(0) has three main subunits: a(1), b(2) and c(10-14). The alpha and beta chains form an alternating ring which encloses part of the gamma chain. F(1) is attached to F(0) by a central stalk formed by the gamma and epsilon chains, while a peripheral stalk is formed by the delta and b chains.

The protein localises to the cell inner membrane. Functionally, f(1)F(0) ATP synthase produces ATP from ADP in the presence of a proton or sodium gradient. F-type ATPases consist of two structural domains, F(1) containing the extramembraneous catalytic core and F(0) containing the membrane proton channel, linked together by a central stalk and a peripheral stalk. During catalysis, ATP synthesis in the catalytic domain of F(1) is coupled via a rotary mechanism of the central stalk subunits to proton translocation. In terms of biological role, this protein is part of the stalk that links CF(0) to CF(1). It either transmits conformational changes from CF(0) to CF(1) or is implicated in proton conduction. The polypeptide is ATP synthase subunit delta (Burkholderia mallei (strain SAVP1)).